The following is a 275-amino-acid chain: Putative ABC transporter permease protein ORF2 (275 aa).

Helical transmembrane passes span 11 to 31 (YFIFLAVWTLIADVPFLFMLF), 74 to 94 (IAVSISVVLILIISSMAAFAF), 108 to 128 (LIIAGMAIPIHVTLIPIYVLT), 136 to 156 (TVFALIGPYVALSLPMSIFIL), 185 to 205 (ILLPLSAPALITVGIYNGTYL), and 239 to 259 (IPAIMAFLTLSLLPMLIAYIF). An ABC transmembrane type-1 domain is found at 69–260 (LKNSVIAVSI…LPMLIAYIFG (192 aa)).

Belongs to the binding-protein-dependent transport system permease family. MalFG subfamily.

The protein localises to the cell membrane. This is Putative ABC transporter permease protein ORF2 from Caldicellulosiruptor sp. (strain Rt8B.4).